The following is a 94-amino-acid chain: MDPELLVSIYASTAVSVGIILAAAGLGSALGWGLICSKYLEGIARQPEMRPQLMGQMLFTGGLMEAFPMIVLGMSMWFIFANPFTGAALAAIGS.

2 helical membrane-spanning segments follow: residues 15-35 (VSVG…WGLI) and 61-81 (GGLM…FIFA).

Belongs to the ATPase C chain family. In terms of assembly, F-type ATPases have 2 components, F(1) - the catalytic core - and F(0) - the membrane proton channel. F(1) has five subunits: alpha(3), beta(3), gamma(1), delta(1), epsilon(1). F(0) has three main subunits: a(1), b(2) and c(10-14). The alpha and beta chains form an alternating ring which encloses part of the gamma chain. F(1) is attached to F(0) by a central stalk formed by the gamma and epsilon chains, while a peripheral stalk is formed by the delta and b chains.

It is found in the cell inner membrane. In terms of biological role, f(1)F(0) ATP synthase produces ATP from ADP in the presence of a proton or sodium gradient. F-type ATPases consist of two structural domains, F(1) containing the extramembraneous catalytic core and F(0) containing the membrane proton channel, linked together by a central stalk and a peripheral stalk. During catalysis, ATP synthesis in the catalytic domain of F(1) is coupled via a rotary mechanism of the central stalk subunits to proton translocation. Functionally, key component of the F(0) channel; it plays a direct role in translocation across the membrane. A homomeric c-ring of between 10-14 subunits forms the central stalk rotor element with the F(1) delta and epsilon subunits. The chain is ATP synthase subunit c from Nitrosococcus oceani (strain ATCC 19707 / BCRC 17464 / JCM 30415 / NCIMB 11848 / C-107).